Consider the following 237-residue polypeptide: MPYEKHVEQTVVEKTEQPGHSSTHHAPAQRTVAREQEEVVHKEFTHTDIRVPHIDAPPPIIAASAVGLAEEIVSHGFQASAARISGASTEVDMRPSPKLAEEARRDAERYQKEHEMINRQAEATLQKKAEEYRHQTEAEAEKIRRELEKQHERDIQFRKDLIDQTIEKQKREVDLEAKMAKRELDREAQLAKEALERSRMATNVEVTLDTAAGHTVSGGTTVSSVDKVETVRERKHH.

2 stretches are compositionally biased toward basic and acidic residues: residues 1-17 (MPYE…KTEQ) and 91-105 (VDMR…EARR). Disordered regions lie at residues 1 to 35 (MPYE…VARE) and 85 to 105 (SGAS…EARR). The stretch at 98–201 (KLAEEARRDA…KEALERSRMA (104 aa)) forms a coiled coil. CAHS motif stretches follow at residues 132–150 (YRHQ…LEKQ) and 169–187 (QKRE…LDRE). A disordered region spans residues 212-237 (AGHTVSGGTTVSSVDKVETVRERKHH). Residues 226 to 237 (DKVETVRERKHH) are compositionally biased toward basic and acidic residues.

It belongs to the Cytosolic-abundant heat soluble protein (CAHS) family.

It is found in the cytoplasm. Its subcellular location is the nucleus. Functionally, CAHS proteins are cytosolic heat soluble proteins that seem to contribute to the anhydrobiosis in tardigrades, but their specific mechanisms are yet to be identified. It is possible that protection during anhydrobiosis might occur via the stabilization of vitrifying small molecules such as sugars, but not via the direct glass transition of CAHS proteins themselves. This Ramazzottius varieornatus (Water bear) protein is Cytosolic-abundant heat soluble protein 1.